We begin with the raw amino-acid sequence, 378 residues long: Mating-type protein MAT-1 (378 aa).

Residues 60 to 117 constitute a DNA-binding region (alpha box); that stretch reads KARKALNAFVGFRCYYITIPMFKPWPMKKLSNLIGLLWEADPNKSLWSLMAKPWSTIR.

The protein belongs to the MATALPHA1 family.

The protein resides in the nucleus. Its function is as follows. Mating type proteins are sequence specific DNA-binding proteins that act as master switches in fungal differentiation by controlling gene expression in a cell type-specific fashion. Transcriptional activator that induces the transcription of alpha-specific genes. This is Mating-type protein MAT-1 (MAT1) from Cochliobolus sativus (Common root rot and spot blotch fungus).